The following is a 506-amino-acid chain: MAQKKKEELSDLIEASGREEDLNELMRVRREKLAELRDKGIEPYGGRFERTHTARYILDNFVEMENRPVVIAGRIMSRRGMGKATFAHIQDGTGQIQIYVRLNDVGPESYELFGRLDIGDIIGVQGSVFKTRMGEITVAAESFKILSKSLRPLPEKWHGLRDVELRYRQRYVDLIVNPEVKEVFETRSKIIRACRNFLDGKGFLEVETPMMQVIPGGAAARPFITHHNALDMDLYLRIAPELYLKRLLVGGFEKVYEINRNFRNEGISTKHNPEFTMLELYQAYADYTDMMNLTEELISAVAVEALGTTKIEYQGTEIDLAPPWPRIPMLETIKVHAGLDFGALKSAEEAFKAVEQAGIGLELDPSDSWGTIVNKVFEEVVEPKLIQPTFVVDYPVEISPLAKRKAEDPELTYRFELFIYGREIANAFSELNDPIDQKGRFLKQVEKRKAGDEEAHMMDEDYINALEYGMPPAGGLGIGIDRLVMLLTNSASIRDVILFPLMKPRE.

Residues E416 and E423 each contribute to the Mg(2+) site.

The protein belongs to the class-II aminoacyl-tRNA synthetase family. As to quaternary structure, homodimer. It depends on Mg(2+) as a cofactor.

The protein resides in the cytoplasm. It carries out the reaction tRNA(Lys) + L-lysine + ATP = L-lysyl-tRNA(Lys) + AMP + diphosphate. This is Lysine--tRNA ligase from Pelotomaculum thermopropionicum (strain DSM 13744 / JCM 10971 / SI).